The sequence spans 601 residues: Elongation factor 4 (601 aa).

Residues 7-189 (KNIRNFSIVA…AIVTRLPPPQ (183 aa)) enclose the tr-type G domain. GTP-binding positions include 19–24 (DHGKST) and 136–139 (NKID).

The protein belongs to the TRAFAC class translation factor GTPase superfamily. Classic translation factor GTPase family. LepA subfamily.

Its subcellular location is the cell inner membrane. It catalyses the reaction GTP + H2O = GDP + phosphate + H(+). In terms of biological role, required for accurate and efficient protein synthesis under certain stress conditions. May act as a fidelity factor of the translation reaction, by catalyzing a one-codon backward translocation of tRNAs on improperly translocated ribosomes. Back-translocation proceeds from a post-translocation (POST) complex to a pre-translocation (PRE) complex, thus giving elongation factor G a second chance to translocate the tRNAs correctly. Binds to ribosomes in a GTP-dependent manner. This chain is Elongation factor 4, found in Methylocella silvestris (strain DSM 15510 / CIP 108128 / LMG 27833 / NCIMB 13906 / BL2).